A 112-amino-acid polypeptide reads, in one-letter code: Probable fatty acid-binding protein (112 aa).

It belongs to the calycin superfamily. Fatty-acid binding protein (FABP) family.

This chain is Probable fatty acid-binding protein, found in Anopheles gambiae (African malaria mosquito).